A 484-amino-acid polypeptide reads, in one-letter code: Cobyric acid synthase (484 aa).

One can recognise a GATase cobBQ-type domain in the interval 253 to 430; the sequence is SLRVAVVRFP…WHGAFEHDEF (178 aa). Residue C334 is the Nucleophile of the active site. H422 is a catalytic residue.

Belongs to the CobB/CobQ family. CobQ subfamily.

Its pathway is cofactor biosynthesis; adenosylcobalamin biosynthesis. Its function is as follows. Catalyzes amidations at positions B, D, E, and G on adenosylcobyrinic A,C-diamide. NH(2) groups are provided by glutamine, and one molecule of ATP is hydrogenolyzed for each amidation. This chain is Cobyric acid synthase, found in Cutibacterium acnes (strain DSM 16379 / KPA171202) (Propionibacterium acnes).